The sequence spans 375 residues: Methylthioribose-1-phosphate isomerase (375 aa).

The active-site Proton donor is the Asp-259.

This sequence belongs to the eIF-2B alpha/beta/delta subunits family. MtnA subfamily.

The protein resides in the cytoplasm. Its subcellular location is the nucleus. The enzyme catalyses 5-(methylsulfanyl)-alpha-D-ribose 1-phosphate = 5-(methylsulfanyl)-D-ribulose 1-phosphate. It participates in amino-acid biosynthesis; L-methionine biosynthesis via salvage pathway; L-methionine from S-methyl-5-thio-alpha-D-ribose 1-phosphate: step 1/6. Its function is as follows. Catalyzes the interconversion of methylthioribose-1-phosphate (MTR-1-P) into methylthioribulose-1-phosphate (MTRu-1-P). The sequence is that of Methylthioribose-1-phosphate isomerase from Populus trichocarpa (Western balsam poplar).